The primary structure comprises 78 residues: D-alanyl carrier protein (78 aa).

The Carrier domain occupies 1–77; that stretch reads MDLKEQIVEI…KVVAKVESLI (77 aa). Residue Ser35 is modified to O-(pantetheine 4'-phosphoryl)serine.

The protein belongs to the DltC family. Post-translationally, 4'-phosphopantetheine is transferred from CoA to a specific serine of apo-DCP.

The protein localises to the cytoplasm. It functions in the pathway cell wall biogenesis; lipoteichoic acid biosynthesis. In terms of biological role, carrier protein involved in the D-alanylation of lipoteichoic acid (LTA). The loading of thioester-linked D-alanine onto DltC is catalyzed by D-alanine--D-alanyl carrier protein ligase DltA. The DltC-carried D-alanyl group is further transferred to cell membrane phosphatidylglycerol (PG) by forming an ester bond, probably catalyzed by DltD. D-alanylation of LTA plays an important role in modulating the properties of the cell wall in Gram-positive bacteria, influencing the net charge of the cell wall. This Leuconostoc mesenteroides subsp. mesenteroides (strain ATCC 8293 / DSM 20343 / BCRC 11652 / CCM 1803 / JCM 6124 / NCDO 523 / NBRC 100496 / NCIMB 8023 / NCTC 12954 / NRRL B-1118 / 37Y) protein is D-alanyl carrier protein.